A 922-amino-acid polypeptide reads, in one-letter code: Isoleucine--tRNA ligase (922 aa).

The 'HIGH' region motif lies at 58-68; the sequence is PYANGDIHIGH. Glutamate 552 lines the L-isoleucyl-5'-AMP pocket. Positions 593–597 match the 'KMSKS' region motif; the sequence is KMSKS. Lysine 596 serves as a coordination point for ATP. The Zn(2+) site is built by cysteine 885, cysteine 888, cysteine 905, and cysteine 908.

This sequence belongs to the class-I aminoacyl-tRNA synthetase family. IleS type 1 subfamily. In terms of assembly, monomer. Zn(2+) serves as cofactor.

It is found in the cytoplasm. It catalyses the reaction tRNA(Ile) + L-isoleucine + ATP = L-isoleucyl-tRNA(Ile) + AMP + diphosphate. Functionally, catalyzes the attachment of isoleucine to tRNA(Ile). As IleRS can inadvertently accommodate and process structurally similar amino acids such as valine, to avoid such errors it has two additional distinct tRNA(Ile)-dependent editing activities. One activity is designated as 'pretransfer' editing and involves the hydrolysis of activated Val-AMP. The other activity is designated 'posttransfer' editing and involves deacylation of mischarged Val-tRNA(Ile). This Ruthia magnifica subsp. Calyptogena magnifica protein is Isoleucine--tRNA ligase.